The following is a 225-amino-acid chain: Small ribosomal subunit protein uS2 (225 aa).

Basic and acidic residues predominate over residues 1-13; the sequence is MAEAKPALEKEAA. Residues 1-33 are disordered; it reads MAEAKPALEKEAAVKTGSIPSESEDETASHKEG.

This sequence belongs to the universal ribosomal protein uS2 family.

The polypeptide is Small ribosomal subunit protein uS2 (Methanosarcina acetivorans (strain ATCC 35395 / DSM 2834 / JCM 12185 / C2A)).